The primary structure comprises 102 residues: Death-associated protein 1 (102 aa).

A disordered region spans residues 1–102; the sequence is MSSPPEGKLE…RTQHIQQPRK (102 aa). At Ser2 the chain carries N-acetylserine. Ser3 is subject to Phosphoserine; by MTOR. Lys29 is modified (N6-acetyllysine). Over residues 32-43 the composition is skewed to basic and acidic residues; the sequence is HTGDTKEEKDKD. Ser49 is subject to Phosphoserine. The residue at position 51 (Ser51) is a Phosphoserine; by MTOR. Ser91 carries the phosphoserine modification. Polar residues predominate over residues 92 to 102; sequence PRTQHIQQPRK.

The protein belongs to the DAP-DAPL1 family. Associates with ribosomes; inhibiting translation. Interacts with eiF5a (EIF5A and EIF5A2); inhibiting translation. Post-translationally, phosphorylated. Phosphorylation by MTOR inhibits the suppressive activity of DAP toward autophagy.

Its function is as follows. Ribosome-binding protein involved in ribosome hibernation, a process during which ribosomes are stabilized in an inactive state and preserved from proteasomal degradation. Acts via its association with eiF5a (EIF5A and EIF5A2) at the polypeptide exit tunnel of the ribosome, preventing mRNA translation. Involved in ribosome hibernation in the mature oocyte by preventing mRNA translation, leading to ribosome inactivation. Ribosomes, which are produced in large quantities during oogenesis, are stored and translationally repressed in the oocyte and early embryo. Also acts as a negative regulator of autophagy. Involved in mediating interferon-gamma-induced cell death. This Homo sapiens (Human) protein is Death-associated protein 1.